Consider the following 230-residue polypeptide: uncharacterized protein (230 aa).

This sequence belongs to the transferase hexapeptide repeat family.

This is an uncharacterized protein from Escherichia coli (strain K12).